A 181-amino-acid polypeptide reads, in one-letter code: Inner membrane-spanning protein YciB (181 aa).

Transmembrane regions (helical) follow at residues 3–23 (LLFD…FGIY), 54–74 (SLAI…PWFI), 81–101 (IYWL…KPLI), 119–139 (LNLA…YVAY), and 149–169 (FKLF…AFYL).

Belongs to the YciB family.

Its subcellular location is the cell inner membrane. In terms of biological role, plays a role in cell envelope biogenesis, maintenance of cell envelope integrity and membrane homeostasis. The protein is Inner membrane-spanning protein YciB of Legionella pneumophila (strain Corby).